A 362-amino-acid polypeptide reads, in one-letter code: N5-carboxyaminoimidazole ribonucleotide synthase (362 aa).

ATP contacts are provided by residues Arg-108, Lys-148, 153–159 (GYDGKGQ), 185–188 (EGFV), Glu-193, His-216, and 270–271 (NE). The ATP-grasp domain occupies 112-300 (KQFLNESGIE…QFEQHIRAVA (189 aa)).

The protein belongs to the PurK/PurT family. Homodimer.

The enzyme catalyses 5-amino-1-(5-phospho-beta-D-ribosyl)imidazole + hydrogencarbonate + ATP = 5-carboxyamino-1-(5-phospho-D-ribosyl)imidazole + ADP + phosphate + 2 H(+). It functions in the pathway purine metabolism; IMP biosynthesis via de novo pathway; 5-amino-1-(5-phospho-D-ribosyl)imidazole-4-carboxylate from 5-amino-1-(5-phospho-D-ribosyl)imidazole (N5-CAIR route): step 1/2. Its function is as follows. Catalyzes the ATP-dependent conversion of 5-aminoimidazole ribonucleotide (AIR) and HCO(3)(-) to N5-carboxyaminoimidazole ribonucleotide (N5-CAIR). The protein is N5-carboxyaminoimidazole ribonucleotide synthase of Brucella melitensis biotype 1 (strain ATCC 23456 / CCUG 17765 / NCTC 10094 / 16M).